The following is a 310-amino-acid chain: Low affinity immunoglobulin gamma Fc region receptor II-b (310 aa).

Residues 1-42 (MGILSFLPVLATESDWADCKSPQPWGHMLLWTAVLFLAPVAG) form the signal peptide. The Extracellular segment spans residues 43-217 (TPAAPPKAVL…KPVTITVQAP (175 aa)). 2 Ig-like C2-type domains span residues 48–127 (PKAV…VHLT) and 131–213 (EWLV…VTIT). 2 disulfides stabilise this stretch: Cys71-Cys113 and Cys152-Cys196. Asn106, Asn180, and Asn187 each carry an N-linked (GlcNAc...) asparagine glycan. The helical transmembrane segment at 218 to 240 (SSSPMGIIVAVVTGIAVAAIVAA) threads the bilayer. Residues 241-310 (VVALIYCRKK…LEEPDDQNRI (70 aa)) are Cytoplasmic-facing. The ITIM motif motif lies at 290–295 (ITYSLL). Tyr292 carries the post-translational modification Phosphotyrosine; by SRC-type Tyr-kinases.

Interacts with INPP5D/SHIP1. Interacts with FGR. Interacts with LYN. In terms of assembly, (Microbial infection) Isoform IIB1 interacts with measles virus protein N. Protein N is released in the blood following lysis of measles infected cells. This interaction presumably block inflammatory immune response. Post-translationally, phosphorylated by the SRC-type Tyr-kinases LYN and BLK. In terms of tissue distribution, is the most broadly distributed Fc-gamma-receptor. Expressed in monocyte, neutrophils, macrophages, basophils, eosinophils, Langerhans cells, B-cells, platelets cells and placenta (endothelial cells). Not detected in natural killer cells.

The protein localises to the cell membrane. In terms of biological role, receptor for the Fc region of complexed or aggregated immunoglobulins gamma. Low affinity receptor. Involved in a variety of effector and regulatory functions such as phagocytosis of immune complexes and modulation of antibody production by B-cells. Binding to this receptor results in down-modulation of previous state of cell activation triggered via antigen receptors on B-cells (BCR), T-cells (TCR) or via another Fc receptor. Isoform IIB1 fails to mediate endocytosis or phagocytosis. Isoform IIB2 does not trigger phagocytosis. This Homo sapiens (Human) protein is Low affinity immunoglobulin gamma Fc region receptor II-b (FCGR2B).